Here is a 185-residue protein sequence, read N- to C-terminus: Elongation factor P (185 aa).

This sequence belongs to the elongation factor P family.

The protein resides in the cytoplasm. Its pathway is protein biosynthesis; polypeptide chain elongation. Its function is as follows. Involved in peptide bond synthesis. Stimulates efficient translation and peptide-bond synthesis on native or reconstituted 70S ribosomes in vitro. Probably functions indirectly by altering the affinity of the ribosome for aminoacyl-tRNA, thus increasing their reactivity as acceptors for peptidyl transferase. This Finegoldia magna (strain ATCC 29328 / DSM 20472 / WAL 2508) (Peptostreptococcus magnus) protein is Elongation factor P.